A 683-amino-acid chain; its full sequence is Phenoloxidase 3 (683 aa).

A propeptide spanning residues 1–48 (MADKKNLLLLFDHPTEPVFMDKGGNGTVFDVPDSYVTDRYNQMCKKVQ) is cleaved from the precursor. Cu cation-binding residues include His-209, His-213, and His-239. Glu-351 (proton acceptor) is an active-site residue. Asn-358 carries an N-linked (GlcNAc...) asparagine glycan. Residues His-366, His-370, and His-406 each contribute to the Cu cation site. Asn-492 and Asn-546 each carry an N-linked (GlcNAc...) asparagine glycan. Cystine bridges form between Cys-574–Cys-617 and Cys-576–Cys-624.

This sequence belongs to the tyrosinase family. Requires Cu(2+) as cofactor. Post-translationally, upon activation, a trypsin type protease cleaves prophenol oxidase to yield the active enzyme.

Its subcellular location is the secreted. The enzyme catalyses 2 L-dopa + O2 = 2 L-dopaquinone + 2 H2O. It carries out the reaction L-tyrosine + O2 = L-dopaquinone + H2O. In terms of biological role, this is a copper-containing oxidase that functions in the formation of pigments such as melanins and other polyphenolic compounds. Catalyzes the rate-limiting conversions of tyrosine to DOPA, DOPA to DOPA-quinone and possibly 5,6 dihydroxyindole to indole-5'6 quinone. In Drosophila melanogaster (Fruit fly), this protein is Phenoloxidase 3 (PPO3).